A 328-amino-acid chain; its full sequence is Phenylalanine--tRNA ligase alpha subunit (328 aa).

Glutamate 245 contributes to the Mg(2+) binding site.

It belongs to the class-II aminoacyl-tRNA synthetase family. Phe-tRNA synthetase alpha subunit type 1 subfamily. Tetramer of two alpha and two beta subunits. It depends on Mg(2+) as a cofactor.

It is found in the cytoplasm. It catalyses the reaction tRNA(Phe) + L-phenylalanine + ATP = L-phenylalanyl-tRNA(Phe) + AMP + diphosphate + H(+). This chain is Phenylalanine--tRNA ligase alpha subunit, found in Helicobacter acinonychis (strain Sheeba).